The primary structure comprises 334 residues: Glyceraldehyde-3-phosphate dehydrogenase (334 aa).

NAD(+) contacts are provided by residues 11 to 12 (RI), Asp-33, and Ser-119. D-glyceraldehyde 3-phosphate is bound by residues 149–151 (SCT) and Thr-180. The active-site Nucleophile is Cys-150. Asn-181 is a binding site for NAD(+). D-glyceraldehyde 3-phosphate-binding positions include Arg-197, 210–211 (TG), and Arg-233. Position 314 (Asn-314) interacts with NAD(+).

This sequence belongs to the glyceraldehyde-3-phosphate dehydrogenase family. Homotetramer.

It is found in the cytoplasm. The enzyme catalyses D-glyceraldehyde 3-phosphate + phosphate + NAD(+) = (2R)-3-phospho-glyceroyl phosphate + NADH + H(+). The protein operates within carbohydrate degradation; glycolysis; pyruvate from D-glyceraldehyde 3-phosphate: step 1/5. Functionally, catalyzes the oxidative phosphorylation of glyceraldehyde 3-phosphate (G3P) to 1,3-bisphosphoglycerate (BPG) using the cofactor NAD. The first reaction step involves the formation of a hemiacetal intermediate between G3P and a cysteine residue, and this hemiacetal intermediate is then oxidized to a thioester, with concomitant reduction of NAD to NADH. The reduced NADH is then exchanged with the second NAD, and the thioester is attacked by a nucleophilic inorganic phosphate to produce BPG. The protein is Glyceraldehyde-3-phosphate dehydrogenase (gap) of Clostridium acetobutylicum (strain ATCC 824 / DSM 792 / JCM 1419 / IAM 19013 / LMG 5710 / NBRC 13948 / NRRL B-527 / VKM B-1787 / 2291 / W).